A 481-amino-acid chain; its full sequence is MAYNDTDRNQTEKLLKRVRELEQEVQRLKKEQAKNKEDSNIRENSAGAGKTKRAFDFSAHGRRHVALRIAYMGWGYQGFASQENTNNTIEEKLFEALTKTRLVESRQTSNYHRCGRTDKGVSAFGQVISLDLRSQFPRGRDSEDFNVKEEANAAAEEIRYTHILNRVLPPDIRILAWAPVEPSFSARFSCLERTYRYFFPRADLDIVTMDYAAQKYVGTHDFRNLCKMDVANGVINFQRTILSAQVQLVGQSPGEGRWQEPFQLCQFEVTGQAFLYHQVRCMMAILFLIGQGMEKPEIIDELLNIEKNPQKPQYSMAVEFPLVLYDCKFENVKWIYDQEAQEFNITHLQQLWANHAVKTHMLYSMLQGLDTVPVPCGIGPKMDGMTEWGNVKPSVIKQTSAFVEGVKMRTYKPLMDRPKCQGLESRIQHFVRRGRIEHPHLFHEEETKAKRDCNDTLEEENTNLETPTKRVCVDTEIKSII.

Alanine 2 carries the post-translational modification N-acetylalanine. Residues 29–41 (KKEQAKNKEDSNI) show a composition bias toward basic and acidic residues. The segment at 29–50 (KKEQAKNKEDSNIRENSAGAGK) is disordered. Aspartate 118 acts as the Nucleophile in catalysis. Tyrosine 195 lines the substrate pocket. 3 positions are modified to phosphothreonine: threonine 456, threonine 466, and threonine 468.

This sequence belongs to the tRNA pseudouridine synthase TruA family.

Its subcellular location is the nucleus. The enzyme catalyses uridine(38/39) in tRNA = pseudouridine(38/39) in tRNA. Formation of pseudouridine at position 39 in the anticodon stem and loop of transfer RNAs. The protein is tRNA pseudouridine(38/39) synthase (PUS3) of Homo sapiens (Human).